We begin with the raw amino-acid sequence, 722 residues long: Polyribonucleotide nucleotidyltransferase (722 aa).

Residues Asp505 and Asp511 each contribute to the Mg(2+) site. The KH domain occupies 572–631 (PSITTIKIHPDKIRDVIGKGGATIRGICDETGASIDLDDDGNVKIYADNAAAAQAAVNRV). The S1 motif domain occupies 641-709 (GAIYKGRVER…NRGRVKLSMK (69 aa)).

The protein belongs to the polyribonucleotide nucleotidyltransferase family. Component of the RNA degradosome, which is a multiprotein complex involved in RNA processing and mRNA degradation. Mg(2+) is required as a cofactor.

Its subcellular location is the cytoplasm. The catalysed reaction is RNA(n+1) + phosphate = RNA(n) + a ribonucleoside 5'-diphosphate. In terms of biological role, involved in mRNA degradation. Catalyzes the phosphorolysis of single-stranded polyribonucleotides processively in the 3'- to 5'-direction. In Marinobacter nauticus (strain ATCC 700491 / DSM 11845 / VT8) (Marinobacter aquaeolei), this protein is Polyribonucleotide nucleotidyltransferase.